A 60-amino-acid chain; its full sequence is Metallothionein (60 aa).

The interval 1 to 28 (MDPCECSKTGNCTCGGSCTCKNCSCTSC) is beta. A divalent metal cation is bound by residues cysteine 4, cysteine 6, cysteine 12, cysteine 14, cysteine 18, cysteine 20, cysteine 23, cysteine 25, cysteine 28, cysteine 32, cysteine 33, cysteine 35, cysteine 36, cysteine 40, cysteine 43, cysteine 47, cysteine 49, cysteine 54, cysteine 58, and cysteine 59. The interval 29 to 60 (KKSCCSCCPSGCSKCASGCVCKGKTCDTSCCQ) is alpha.

The protein belongs to the metallothionein superfamily. Type 1 family.

Functionally, metallothioneins have a high content of cysteine residues that bind various heavy metals. This Gobiomorphus cotidianus (New Zealand common bully) protein is Metallothionein (mt).